A 148-amino-acid chain; its full sequence is Hemoglobin subunit beta-1 (148 aa).

One can recognise a Globin domain in the interval 3–148; sequence EWTDAERTAI…VVSALCRQYH (146 aa). Residues His-64 and His-93 each contribute to the heme b site.

Heterotetramer of two alpha chains and two beta chains. Red blood cells.

In terms of biological role, involved in oxygen transport from gills to the various peripheral tissues. The polypeptide is Hemoglobin subunit beta-1 (ba1) (Danio rerio (Zebrafish)).